We begin with the raw amino-acid sequence, 74 residues long: Translational regulator CsrA (74 aa).

Belongs to the CsrA/RsmA family. In terms of assembly, homodimer; the beta-strands of each monomer intercalate to form a hydrophobic core, while the alpha-helices form wings that extend away from the core.

It is found in the cytoplasm. In terms of biological role, a translational regulator that binds mRNA to regulate translation initiation and/or mRNA stability. Usually binds in the 5'-UTR at or near the Shine-Dalgarno sequence preventing ribosome-binding, thus repressing translation. Its main target seems to be the major flagellin gene, while its function is anatagonized by FliW. In Oceanobacillus iheyensis (strain DSM 14371 / CIP 107618 / JCM 11309 / KCTC 3954 / HTE831), this protein is Translational regulator CsrA.